A 91-amino-acid chain; its full sequence is Large ribosomal subunit protein bL31B (91 aa).

This sequence belongs to the bacterial ribosomal protein bL31 family. Type B subfamily. Part of the 50S ribosomal subunit.

This Neisseria meningitidis serogroup C (strain 053442) protein is Large ribosomal subunit protein bL31B.